A 360-amino-acid chain; its full sequence is Phospho-N-acetylmuramoyl-pentapeptide-transferase (360 aa).

A run of 10 helical transmembrane segments spans residues 3–23 (SILV…PYLI), 52–72 (MGGV…HLTV), 81–101 (GLLV…DDFI), 115–135 (AKLV…MQFA), 153–173 (ITVI…AISG), 187–207 (LAGG…FWQF), 230–250 (IALV…WNAA), 254–274 (IFMG…LSMV), 282–302 (IIIG…IVVF), and 333–353 (FWVL…ADWL).

Belongs to the glycosyltransferase 4 family. MraY subfamily. The cofactor is Mg(2+).

Its subcellular location is the cell membrane. The catalysed reaction is UDP-N-acetyl-alpha-D-muramoyl-L-alanyl-gamma-D-glutamyl-meso-2,6-diaminopimeloyl-D-alanyl-D-alanine + di-trans,octa-cis-undecaprenyl phosphate = di-trans,octa-cis-undecaprenyl diphospho-N-acetyl-alpha-D-muramoyl-L-alanyl-D-glutamyl-meso-2,6-diaminopimeloyl-D-alanyl-D-alanine + UMP. It functions in the pathway cell wall biogenesis; peptidoglycan biosynthesis. Its function is as follows. Catalyzes the initial step of the lipid cycle reactions in the biosynthesis of the cell wall peptidoglycan: transfers peptidoglycan precursor phospho-MurNAc-pentapeptide from UDP-MurNAc-pentapeptide onto the lipid carrier undecaprenyl phosphate, yielding undecaprenyl-pyrophosphoryl-MurNAc-pentapeptide, known as lipid I. This chain is Phospho-N-acetylmuramoyl-pentapeptide-transferase, found in Saccharopolyspora erythraea (strain ATCC 11635 / DSM 40517 / JCM 4748 / NBRC 13426 / NCIMB 8594 / NRRL 2338).